A 225-amino-acid chain; its full sequence is MSFIDPRTYIPSNSTESQILKFTFIVCVPICVILIVLLVLYIMRRNSNTNVDWSSLGGFVPTNNNLSTAELGLSKDIREMLPIVIYKESFTVNDTQCSVCLGDYQAEEKLQQMPSCGHTFHMECIDLWLTSHTTCPLCRLSLIPKPSVDLSHQSIEIVSSIENTNGGEASTQPDSQSATEAIIHIDDVEEGNRDSIEVVKESEENDRNSVGTSDGCCSCRLGEKA.

A helical membrane pass occupies residues 22-42; that stretch reads FTFIVCVPICVILIVLLVLYI. The RING-type; atypical zinc finger occupies 97 to 139; it reads CSVCLGDYQAEEKLQQMPSCGHTFHMECIDLWLTSHTTCPLCR.

Belongs to the RING-type zinc finger family. ATL subfamily.

The protein resides in the membrane. The catalysed reaction is S-ubiquitinyl-[E2 ubiquitin-conjugating enzyme]-L-cysteine + [acceptor protein]-L-lysine = [E2 ubiquitin-conjugating enzyme]-L-cysteine + N(6)-ubiquitinyl-[acceptor protein]-L-lysine.. It participates in protein modification; protein ubiquitination. Its function is as follows. E3 ubiquitin-protein ligase able to catalyze polyubiquitination with ubiquitin-conjugating enzyme E2 UBC8, UBC10, UBC11, and UBC34 in vitro. The sequence is that of E3 ubiquitin-protein ligase ATL59 (ATL59) from Arabidopsis thaliana (Mouse-ear cress).